We begin with the raw amino-acid sequence, 335 residues long: 4-hydroxythreonine-4-phosphate dehydrogenase (335 aa).

A substrate-binding site is contributed by T132. A divalent metal cation is bound by residues H163, H208, and H263. Residues K271, N280, and R289 each coordinate substrate.

The protein belongs to the PdxA family. As to quaternary structure, homodimer. Requires Zn(2+) as cofactor. It depends on Mg(2+) as a cofactor. Co(2+) is required as a cofactor.

Its subcellular location is the cytoplasm. The enzyme catalyses 4-(phosphooxy)-L-threonine + NAD(+) = 3-amino-2-oxopropyl phosphate + CO2 + NADH. It functions in the pathway cofactor biosynthesis; pyridoxine 5'-phosphate biosynthesis; pyridoxine 5'-phosphate from D-erythrose 4-phosphate: step 4/5. Catalyzes the NAD(P)-dependent oxidation of 4-(phosphooxy)-L-threonine (HTP) into 2-amino-3-oxo-4-(phosphooxy)butyric acid which spontaneously decarboxylates to form 3-amino-2-oxopropyl phosphate (AHAP). In Zymomonas mobilis subsp. mobilis (strain ATCC 31821 / ZM4 / CP4), this protein is 4-hydroxythreonine-4-phosphate dehydrogenase.